A 124-amino-acid polypeptide reads, in one-letter code: UPF0231 protein Shewmr7_3366 (124 aa).

This sequence belongs to the UPF0231 family.

The sequence is that of UPF0231 protein Shewmr7_3366 from Shewanella sp. (strain MR-7).